The following is a 204-amino-acid chain: MTDRIARVERTTKESSITVELNLDGTGIVDVSTGVPFFDHMLTALGSHASFDLTVHAKGDIEIEAHHTVEDTSIVLGQALGQALGDKKGIRRFGDAFIPMDETLAHASVDVSGRPYCVHTGEPEHLLHAVIGGYPGVPYATVINRHVFESIALNARIALHVRVLYGRDQHHITEAEFKAVARALREAVEPDPRVTGVPSTKGSL.

It belongs to the imidazoleglycerol-phosphate dehydratase family.

The protein localises to the cytoplasm. It carries out the reaction D-erythro-1-(imidazol-4-yl)glycerol 3-phosphate = 3-(imidazol-4-yl)-2-oxopropyl phosphate + H2O. The protein operates within amino-acid biosynthesis; L-histidine biosynthesis; L-histidine from 5-phospho-alpha-D-ribose 1-diphosphate: step 6/9. The chain is Imidazoleglycerol-phosphate dehydratase from Rhodococcus opacus (strain B4).